The following is a 387-amino-acid chain: Penicillopepsin-1 (387 aa).

The signal sequence occupies residues M1–A19. Residues A20–A66 constitute a propeptide, activation peptide. The region spanning Y85–A384 is the Peptidase A1 domain. Residues D101 and D279 contribute to the active site. The N-linked (GlcNAc...) asparagine glycan is linked to N304. Residues C315 and C347 are joined by a disulfide bond.

Belongs to the peptidase A1 family. In terms of assembly, monomer.

The protein localises to the secreted. The enzyme catalyses Hydrolysis of proteins with broad specificity similar to that of pepsin A, preferring hydrophobic residues at P1 and P1', but also cleaving 20-Gly-|-Glu-21 in the B chain of insulin. Clots milk, and activates trypsinogen.. In terms of biological role, secreted aspartic endopeptidase that allows assimilation of proteinaceous substrates. The scissile peptide bond is attacked by a nucleophilic water molecule activated by two aspartic residues in the active site. Shows a broad primary substrate specificity. Favors hydrophobic residues at the P1 and P1' positions, but can also activate trypsinogen and hydrolyze the B chain of insulin between positions 'Gly-20' and 'Glu-21'. This chain is Penicillopepsin-1 (pepA), found in Talaromyces stipitatus (strain ATCC 10500 / CBS 375.48 / QM 6759 / NRRL 1006) (Penicillium stipitatum).